The following is a 181-amino-acid chain: ATP synthase subunit b (181 aa).

A helical transmembrane segment spans residues Leu-16–Phe-36.

Belongs to the ATPase B chain family. F-type ATPases have 2 components, F(1) - the catalytic core - and F(0) - the membrane proton channel. F(1) has five subunits: alpha(3), beta(3), gamma(1), delta(1), epsilon(1). F(0) has three main subunits: a(1), b(2) and c(10-14). The alpha and beta chains form an alternating ring which encloses part of the gamma chain. F(1) is attached to F(0) by a central stalk formed by the gamma and epsilon chains, while a peripheral stalk is formed by the delta and b chains.

It localises to the cell membrane. In terms of biological role, f(1)F(0) ATP synthase produces ATP from ADP in the presence of a proton or sodium gradient. F-type ATPases consist of two structural domains, F(1) containing the extramembraneous catalytic core and F(0) containing the membrane proton channel, linked together by a central stalk and a peripheral stalk. During catalysis, ATP synthesis in the catalytic domain of F(1) is coupled via a rotary mechanism of the central stalk subunits to proton translocation. Its function is as follows. Component of the F(0) channel, it forms part of the peripheral stalk, linking F(1) to F(0). This is ATP synthase subunit b from Streptomyces lividans.